The primary structure comprises 473 residues: Mannose-1-phosphate guanylyltransferase (473 aa).

Belongs to the mannose-6-phosphate isomerase type 2 family. As to quaternary structure, homodimer.

It catalyses the reaction alpha-D-mannose 1-phosphate + GTP + H(+) = GDP-alpha-D-mannose + diphosphate. It functions in the pathway nucleotide-sugar biosynthesis; GDP-alpha-D-mannose biosynthesis; GDP-alpha-D-mannose from alpha-D-mannose 1-phosphate (GTP route): step 1/1. Its pathway is bacterial outer membrane biogenesis; LPS O-antigen biosynthesis. Functionally, involved in GDP-mannose biosynthesis which serves as the activated sugar nucleotide precursor for mannose residues in cell surface polysaccharides. This enzyme participates in synthesis of the LPS group C2 O antigen. This Salmonella muenchen protein is Mannose-1-phosphate guanylyltransferase (rfbM).